The following is a 305-amino-acid chain: Homeobox protein NANOGP8 (305 aa).

The interval 1–96 is disordered; it reads MSVDPACPQS…KEDKVPVKKQ (96 aa). Over residues 65 to 82 the composition is skewed to polar residues; sequence SPDSSTSPKGKQPTSAEN. The segment at residues 95–154 is a DNA-binding region (homeobox); it reads KQKTRTVFSSTQLCVLNDRFQRQKYLSLQQMQELSNILNLSYKQVKTWFQNQRMKSKRWQ. 8 tandem repeats follow at residues 196-200, 201-205, 206-210, 216-220, 221-225, 226-230, 231-235, and 236-240. The 8 X repeats starting with a Trp in each unit stretch occupies residues 196–240; sequence WSNQTWNNSTWSNQTQNIQSWSNHSWNTQTWCTQSWNNQAWNSPF. The interval 196–240 is sufficient for transactivation activity; the sequence is WSNQTWNNSTWSNQTQNIQSWSNHSWNTQTWCTQSWNNQAWNSPF. The segment at 241-305 is sufficient for strong transactivation activity; sequence YNCGEESLQS…YSMNMQPEDV (65 aa).

This sequence belongs to the Nanog homeobox family.

The protein resides in the nucleus. In terms of biological role, may act as a transcription regulator. When overexpressed, promotes entry of cells into S phase and cell proliferation. The chain is Homeobox protein NANOGP8 (NANOGP8) from Homo sapiens (Human).